The sequence spans 486 residues: Ribulose bisphosphate carboxylase large chain, plasmid (486 aa).

Substrate-binding residues include Asn-126 and Thr-176. Catalysis depends on Lys-178, which acts as the Proton acceptor. Lys-180 contributes to the substrate binding site. Mg(2+)-binding residues include Lys-204, Asp-206, and Glu-207. Lys-204 carries the N6-carboxylysine modification. His-296 serves as the catalytic Proton acceptor. Positions 297, 329, and 381 each coordinate substrate.

The protein belongs to the RuBisCO large chain family. Type I subfamily. Heterohexadecamer of 8 large chains and 8 small chains. It depends on Mg(2+) as a cofactor.

The enzyme catalyses 2 (2R)-3-phosphoglycerate + 2 H(+) = D-ribulose 1,5-bisphosphate + CO2 + H2O. The catalysed reaction is D-ribulose 1,5-bisphosphate + O2 = 2-phosphoglycolate + (2R)-3-phosphoglycerate + 2 H(+). Its function is as follows. RuBisCO catalyzes two reactions: the carboxylation of D-ribulose 1,5-bisphosphate, the primary event in carbon dioxide fixation, as well as the oxidative fragmentation of the pentose substrate. Both reactions occur simultaneously and in competition at the same active site. The protein is Ribulose bisphosphate carboxylase large chain, plasmid (cbbL2) of Cupriavidus necator (strain ATCC 17699 / DSM 428 / KCTC 22496 / NCIMB 10442 / H16 / Stanier 337) (Ralstonia eutropha).